Reading from the N-terminus, the 182-residue chain is Sperm acrosome-associated protein 7 (182 aa).

A signal peptide spans 1 to 24 (MAANRGSRTFLSVFLLCCWQGAEL). N40 is a glycosylation site (N-linked (GlcNAc...) asparagine). A compositionally biased stretch (basic and acidic residues) spans 112-140 (LPTKEESGKNDRSTVANLHDHSSQTKHEP). The interval 112 to 154 (LPTKEESGKNDRSTVANLHDHSSQTKHEPPSSPEGKGSSNDDV) is disordered.

Testis-specific. Expressed in zygotene and pachytene spermatocytes, round spermatids, elongating spermatids and spermatozoa (at protein level). Testis-specific.

Its subcellular location is the secreted. The protein localises to the cytoplasmic vesicle. It localises to the secretory vesicle. The protein resides in the acrosome lumen. Functionally, involved in fertilization. Seems not to play a direct role in sperm-egg binding or gamete fusion. This is Sperm acrosome-associated protein 7 from Mus musculus (Mouse).